The sequence spans 126 residues: Holo-[acyl-carrier-protein] synthase (126 aa).

Asp9 and Glu58 together coordinate Mg(2+).

It belongs to the P-Pant transferase superfamily. AcpS family. Mg(2+) serves as cofactor.

It is found in the cytoplasm. The enzyme catalyses apo-[ACP] + CoA = holo-[ACP] + adenosine 3',5'-bisphosphate + H(+). Its function is as follows. Transfers the 4'-phosphopantetheine moiety from coenzyme A to a Ser of acyl-carrier-protein. The polypeptide is Holo-[acyl-carrier-protein] synthase (Yersinia enterocolitica serotype O:8 / biotype 1B (strain NCTC 13174 / 8081)).